The following is a 474-amino-acid chain: Synaptotagmin-15B (474 aa).

2 disordered regions span residues methionine 1–glycine 62 and proline 75–valine 128. Low complexity predominate over residues proline 75 to proline 88. C2 domains follow at residues cysteine 200–isoleucine 317 and glutamate 331–aspartate 452.

The protein belongs to the synaptotagmin family.

This Homo sapiens (Human) protein is Synaptotagmin-15B.